A 183-amino-acid chain; its full sequence is Inner membrane protein p54 (183 aa).

Residues 32 to 52 traverse the membrane as a helical segment; that stretch reads YTILIAIVVLVIIIIVLIYLF. The interval 81-157 is disordered; that stretch reads EVTPQPGTSK…PYTTVTTQNT (77 aa). The span at 111-122 shows a compositional bias: polar residues; it reads RPATNKPVTDNP. Residues 130–143 are compositionally biased toward low complexity; it reads ATGGPAAAPAAASA. An interaction with host DYNLL1 region spans residues 149 to 161; it reads YTTVTTQNTASQT.

The protein belongs to the asfivirus envelope protein p54 family. In terms of assembly, interacts with the host light chain cytoplasmic dynein DYNLL1; this interaction is critical for intracellular microtubule-dependent virus transport toward viral factories.

Its subcellular location is the virion membrane. The protein localises to the host cytoplasm. The protein resides in the host cytoskeleton. It is found in the host endoplasmic reticulum membrane. Inner envelope protein involved, through its interaction with host dynein, in the intracellular microtubule-dependent transport of viral capsid toward viral factories. Seems to induce caspase-3 activation and apoptosis. Plays a role in virion morphogenesis by recruiting and transforming the host ER membranes into the precursors of the viral envelope. Involved in virus attachment to the host cell. This chain is Inner membrane protein p54, found in Ornithodoros (relapsing fever ticks).